Consider the following 1077-residue polypeptide: Receptor-like protein 1 (1077 aa).

Residues 1–38 (MRTDERRRWWVKPKKHITLVFITITMIIQFQMKGCVSC) form the signal peptide. Residues 39–120 (VETERMGLLQ…SQTRSLNLSL (82 aa)) are N-cap. Residues 39–1024 (VETERMGLLQ…NEEEGNVIDM (986 aa)) lie on the Extracellular side of the membrane. Asn-117, Asn-131, and Asn-139 each carry an N-linked (GlcNAc...) asparagine glycan. LRR repeat units lie at residues 124 to 147 (FPQLQSLNLSWNWFTNLSDHFLGF), 153 to 176 (LDKLTTLDFSHNMFDNSIVPFLNA), 177 to 201 (ATSIRSLHLESNYMEGVFPPQELSN), 202 to 225 (MTNLRVLNLKDNSFSFLSSQGLTD), 227 to 250 (RDLEVLDLSFNGVNDSEASHSLST), 251 to 274 (AKLKTLDLNFNPLSDFSQLKGLES), 275 to 299 (LQELQVLKLRGNKFNHTLSTHVLKD), 300 to 324 (LKMLQELDLSDNGFTNLDHGRGLEI), 326 to 348 (TSLQVLDFKRNQLSLTHEGYLGI), 351 to 376 (LMKLRELDLSSNALTSLPYCLGNLTH), 378 to 397 (RTLDLSNNQLNGNLSSFVSG), and 399 to 424 (PSVLEYLSLLDNNFDGSFLFNSLVNQ). The N-linked (GlcNAc...) asparagine glycan is linked to Asn-201. Asn-240 is a glycosylation site (N-linked (GlcNAc...) asparagine). Asn-289 carries N-linked (GlcNAc...) asparagine glycosylation. 3 N-linked (GlcNAc...) asparagine glycosylation sites follow: Asn-373, Asn-390, and Asn-423. One copy of the LRR 13; degenerate repeat lies at 425-449 (TRLTVFKLSSKVGVIQVQTESSWAP). LRR repeat units follow at residues 450–473 (LFQLKMLYLSNCSLGSTMLGFLVH), 474–498 (QRDLCFVDLSHNKLTGTFPTWLVKN), 499–522 (NTRLQTILLSGNSLTKLQLPILVH), 524–545 (LQVLDISSNMIYDSIQEDIGMV), 546–570 (FPNLRFMNFSSNHFQGTIPSSIGEM), 572–594 (SLQVLDMSSNGLYGQLPIMFLSG), 595–621 (CYSLRVLKLSNNQLQGKIFSKHANLTG), 623–643 (VGLFLDGNNFTGSLEEGLLKS), 644–666 (KNLTLLDISDNRFSGMLPLWIGR), 667–694 (ISRLSYLYMSGNQLKGPFPFLRQSPWVE), 696–713 (MDISHNSFSGSIPRNVNF), 714–737 (PSLRELRLQNNEFTGLVPGNLFKA), 739–761 (GLEVLDLRNNNFSGKILNTIDQT), 762–785 (SKLRILLLRNNSFQTYIPGKICQL), 786–808 (SEVGLLDLSHNQFRGPIPSCFSK), 877–901 (LRYMHGLDLSSNELSGEIPIEIGDL), 902–925 (QNIRSLNLSSNRLTGSIPDSISKL), 927–949 (GLESLDLSNNKLDGSIPPALADL), and 951–970 (SLGYLNISYNNLSGEIPFKG). N-linked (GlcNAc...) asparagine glycosylation is found at Asn-460 and Asn-498. N-linked (GlcNAc...) asparagine glycosylation occurs at Asn-553. N-linked (GlcNAc...) asparagine glycans are attached at residues Asn-618, Asn-631, and Asn-645. Residues Asn-749 and Asn-771 are each glycosylated (N-linked (GlcNAc...) asparagine). Asn-908 carries N-linked (GlcNAc...) asparagine glycosylation. Residues Asn-956 and Asn-961 are each glycosylated (N-linked (GlcNAc...) asparagine). Positions 971-1024 (HLVTFDERSYIGNAHLCGLPTNKNCISQRVPEPPSVSTHAKEEENEEEGNVIDM) are C-cap/acidic domain. A helical membrane pass occupies residues 1025-1045 (VWFYWTCAAVYISTSLALFAF). At 1046–1077 (LYIDSRWSREWFYRVDLCVHHILQFKRSSVCN) the chain is on the cytoplasmic side.

The protein belongs to the RLP family.

It localises to the cell membrane. Its function is as follows. Involved in plant defense. Confers resistance to the bacterial pathogen Xanthomonas through recognition of the microbe-associated molecular pattern (MAMP) eMax. Functionality seems to depend on the presence of the receptor kinase SOBIR1 as an adapter protein. The polypeptide is Receptor-like protein 1 (Arabidopsis thaliana (Mouse-ear cress)).